The primary structure comprises 550 residues: Protein UshA (550 aa).

A signal peptide spans 1 to 25 (MKFLKRGVALALLAAFALTTQPAQA). Positions 41, 43, 84, 116, 217, 252, and 254 each coordinate Zn(2+). Cys258 and Cys275 are oxidised to a cystine. Residues Phe429 and 498 to 504 (FNATGGD) contribute to the substrate site.

This sequence belongs to the 5'-nucleotidase family. Monomer. Zn(2+) serves as cofactor.

The protein localises to the periplasm. The catalysed reaction is UDP-sugar + H2O = UMP + alpha-D-aldose 1-phosphate.. It carries out the reaction a ribonucleoside 5'-phosphate + H2O = a ribonucleoside + phosphate. Functionally, degradation of external UDP-glucose to uridine monophosphate and glucose-1-phosphate, which can then be used by the cell. In Salmonella pullorum, this protein is Protein UshA (ushA).